A 245-amino-acid chain; its full sequence is Histone deacetylase HDT1 (245 aa).

An N-acetylmethionine modification is found at Met-1. Required to repress transcription regions lie at residues 2-5 (EFWG) and 101-162 (GYSE…EEEE). The disordered stretch occupies residues 99–245 (PQGYSEEEEE…HNKAKHAAAK (147 aa)). The span at 103 to 113 (SEEEEEEEEEV) shows a compositional bias: acidic residues. Over residues 114 to 124 (PAGNAAKAVAK) the composition is skewed to low complexity. The segment covering 137-162 (DDEEDESDSDGMDEDDSDGEDSEEEE) has biased composition (acidic residues). Positions 178-195 (TTPKAPVSAKKAKVAVTP) are enriched in low complexity. Over residues 208-234 (ANQSPKSASQVSCGSCKKTFNSGNALE) the composition is skewed to polar residues. Ser-211 bears the Phosphoserine mark. The segment at 218 to 241 (VSCGSCKKTFNSGNALESHNKAKH) adopts a C2H2-type zinc-finger fold.

Belongs to the histone deacetylase HD2 family. In terms of assembly, interacts with DNMT2. Interacts with DEK3. As to expression, expressed in leaves, roots, stems, young plantlets, flowers and siliques. Highest levels in ovules, embryos, shoot apical meristems and first leaves. Also expressed in somatic embryos.

The protein resides in the nucleus. It localises to the nucleolus. Probably mediates the deacetylation of lysine residues on the N-terminal part of the core histones (H2A, H2B, H3 and H4). Histone deacetylation gives a tag for epigenetic repression and plays an important role in transcriptional regulation, cell cycle progression and developmental events. Required for histone H3 'Lys-9' deacetylation. Involved in rRNA gene silencing in nucleolar dominance. Seems to be implicated in the regulation of genes involved in seeds development. The chain is Histone deacetylase HDT1 from Arabidopsis thaliana (Mouse-ear cress).